Consider the following 272-residue polypeptide: Exosome complex component Rrp42 (272 aa).

It belongs to the RNase PH family. Rrp42 subfamily. Component of the archaeal exosome complex. Forms a hexameric ring-like arrangement composed of 3 Rrp41-Rrp42 heterodimers. The hexameric ring associates with a trimer of Rrp4 and/or Csl4 subunits.

Its subcellular location is the cytoplasm. In terms of biological role, non-catalytic component of the exosome, which is a complex involved in RNA degradation. Contributes to the structuring of the Rrp41 active site. This is Exosome complex component Rrp42 from Thermococcus kodakarensis (strain ATCC BAA-918 / JCM 12380 / KOD1) (Pyrococcus kodakaraensis (strain KOD1)).